Here is a 454-residue protein sequence, read N- to C-terminus: L-cysteine desulfhydrase (454 aa).

Positions 1-25 (MEAGERRNGDSMSHNHRAPKKPRLA) are disordered. Residues 14–23 (HNHRAPKKPR) are compositionally biased toward basic residues. At lysine 257 the chain carries N6-(pyridoxal phosphate)lysine.

This sequence belongs to the class-V pyridoxal-phosphate-dependent aminotransferase family. It depends on pyridoxal 5'-phosphate as a cofactor. Highly expressed in stems and cauline leaves, and at lower levels in roots, rosette leaves and flowers.

It carries out the reaction L-cysteine + H2O = hydrogen sulfide + pyruvate + NH4(+) + H(+). In terms of biological role, catalyzes the production of hydrogen sulfide (H2S) from cysteine. Is mainly responsible for the degradation of cysteine to generate H2S, a regulator of stomatal movement and closure. The sequence is that of L-cysteine desulfhydrase (LCD) from Arabidopsis thaliana (Mouse-ear cress).